Here is a 382-residue protein sequence, read N- to C-terminus: Ribosomal RNA large subunit methyltransferase G (382 aa).

It belongs to the methyltransferase superfamily. RlmG family.

It localises to the cytoplasm. The enzyme catalyses guanosine(1835) in 23S rRNA + S-adenosyl-L-methionine = N(2)-methylguanosine(1835) in 23S rRNA + S-adenosyl-L-homocysteine + H(+). Functionally, specifically methylates the guanine in position 1835 (m2G1835) of 23S rRNA. The protein is Ribosomal RNA large subunit methyltransferase G of Psychromonas ingrahamii (strain DSM 17664 / CCUG 51855 / 37).